A 119-amino-acid polypeptide reads, in one-letter code: NADH-quinone oxidoreductase subunit A (119 aa).

3 helical membrane passes run 7 to 27 (FPVL…MTIG), 63 to 83 (LIAI…PWGV), and 88 to 108 (IGWP…VGFV).

The protein belongs to the complex I subunit 3 family. In terms of assembly, NDH-1 is composed of 14 different subunits. Subunits NuoA, H, J, K, L, M, N constitute the membrane sector of the complex.

The protein localises to the cell inner membrane. It catalyses the reaction a quinone + NADH + 5 H(+)(in) = a quinol + NAD(+) + 4 H(+)(out). Its function is as follows. NDH-1 shuttles electrons from NADH, via FMN and iron-sulfur (Fe-S) centers, to quinones in the respiratory chain. The immediate electron acceptor for the enzyme in this species is believed to be ubiquinone. Couples the redox reaction to proton translocation (for every two electrons transferred, four hydrogen ions are translocated across the cytoplasmic membrane), and thus conserves the redox energy in a proton gradient. The sequence is that of NADH-quinone oxidoreductase subunit A from Ralstonia pickettii (strain 12J).